We begin with the raw amino-acid sequence, 147 residues long: D-aminoacyl-tRNA deacylase (147 aa).

Residues Gly136–Pro137 carry the Gly-cisPro motif, important for rejection of L-amino acids motif.

Belongs to the DTD family. As to quaternary structure, homodimer.

The protein resides in the cytoplasm. The enzyme catalyses glycyl-tRNA(Ala) + H2O = tRNA(Ala) + glycine + H(+). It catalyses the reaction a D-aminoacyl-tRNA + H2O = a tRNA + a D-alpha-amino acid + H(+). Its function is as follows. An aminoacyl-tRNA editing enzyme that deacylates mischarged D-aminoacyl-tRNAs. Also deacylates mischarged glycyl-tRNA(Ala), protecting cells against glycine mischarging by AlaRS. Acts via tRNA-based rather than protein-based catalysis; rejects L-amino acids rather than detecting D-amino acids in the active site. By recycling D-aminoacyl-tRNA to D-amino acids and free tRNA molecules, this enzyme counteracts the toxicity associated with the formation of D-aminoacyl-tRNA entities in vivo and helps enforce protein L-homochirality. The protein is D-aminoacyl-tRNA deacylase of Streptococcus dysgalactiae subsp. equisimilis (Streptococcus equisimilis).